Here is a 483-residue protein sequence, read N- to C-terminus: Proton-coupled amino acid transporter 2 (483 aa).

Topologically, residues 1-58 (MSVTKSTEGPQGAVAIKLDLMSPPESAKKLENKDSTFLDESPSESAGLKKTKGITVFQ) are cytoplasmic. Basic and acidic residues predominate over residues 26–36 (SAKKLENKDST). The interval 26-46 (SAKKLENKDSTFLDESPSESA) is disordered. The chain crosses the membrane as a helical span at residues 59–79 (ALIHLVKGNMGTGILGLPLAV). Topologically, residues 80 to 81 (KN) are extracellular. The chain crosses the membrane as a helical span at residues 82–102 (AGILMGPLSLLVMGFIACHCM). The Cytoplasmic segment spans residues 103-148 (HILVKCAQRFCKRLNKPFMDYGDTVMHGLEANPNAWLQNHAHWGRH). The chain crosses the membrane as a helical span at residues 149–169 (IVSFFLIITQLGFCCVYIVFL). Residues 170 to 197 (ADNLKQVVEAVNSTTNNCYSNETVILTP) lie on the Extracellular side of the membrane. The helical transmembrane segment at 198-218 (TMDSRLYMLSFLPFLVLLVLI) threads the bilayer. Topologically, residues 219-222 (RNLR) are cytoplasmic. A helical transmembrane segment spans residues 223–243 (ILTIFSMLANISMLVSLVIII). The Extracellular portion of the chain corresponds to 244–264 (QYITQEIPDPSRLPLVASWKT). A helical transmembrane segment spans residues 265 to 285 (YPLFFGTAIFSFESIGVVLPL). Topologically, residues 286-296 (ENKMKNARHFP) are cytoplasmic. The chain crosses the membrane as a helical span at residues 297–317 (AILSLGMSIVTSLYIGMAALG). Topologically, residues 318 to 349 (YLRFGDDIKASISLNLPNCWLYQSVKLLYIAG) are extracellular. Residues 350-370 (ILCTYALQFYVPAEIIIPFAI) form a helical membrane-spanning segment. Over 371-379 (SRVSTRWAL) the chain is Cytoplasmic. The chain crosses the membrane as a helical span at residues 380 to 400 (PLDLSIRLVMVCLTCLLAILI). Over 401 to 404 (PRLD) the chain is Extracellular. The chain crosses the membrane as a helical span at residues 405 to 425 (LVISLVGSVSGTALALIIPPL). Residues 426-437 (LEVTTFYSEGMS) lie on the Cytoplasmic side of the membrane. A helical transmembrane segment spans residues 438–458 (PLTIFKDALISILGFVGFVVG). Residues 459-483 (TYQALDELLKSEDSHPFSNSTTFVR) lie on the Extracellular side of the membrane.

Belongs to the amino acid/polyamine transporter 2 family. Abundantly expressed in kidney and muscle. Expressed in the S1 segment of the proximal tubule close to the glomerulus.

The protein resides in the cell membrane. Its subcellular location is the endoplasmic reticulum membrane. The protein localises to the recycling endosome membrane. The enzyme catalyses glycine(in) + H(+)(in) = glycine(out) + H(+)(out). The catalysed reaction is L-alanine(in) + H(+)(in) = L-alanine(out) + H(+)(out). It catalyses the reaction D-alanine(in) + H(+)(in) = D-alanine(out) + H(+)(out). It carries out the reaction L-proline(out) + H(+)(out) = L-proline(in) + H(+)(in). The enzyme catalyses D-proline(out) + H(+)(out) = D-proline(in) + H(+)(in). The catalysed reaction is 4-hydroxy-L-proline(in) + H(+)(in) = 4-hydroxy-L-proline(out) + H(+)(out). It catalyses the reaction L-serine(in) + H(+)(in) = L-serine(out) + H(+)(out). It carries out the reaction D-serine(out) + H(+)(out) = D-serine(in) + H(+)(in). The enzyme catalyses beta-alanine(in) + H(+)(in) = beta-alanine(out) + H(+)(out). The catalysed reaction is 4-aminobutanoate(in) + H(+)(in) = 4-aminobutanoate(out) + H(+)(out). It catalyses the reaction sarcosine(in) + H(+)(in) = sarcosine(out) + H(+)(out). It carries out the reaction N,N-dimethylglycine(in) + H(+)(in) = N,N-dimethylglycine(out) + H(+)(out). Its function is as follows. Electrogenic proton/amino acid symporter with a high selectivity for the small side chains amino acids glycine, alanine and proline, where both L- and D-enantiomers are transported. Extension of the backbone length, as in beta-alanine and 4-aminobutanoate or methylation of the amino group, as in sarcosine and N,N-dimethylglycine, are also tolerated but decrease transport efficiency. A free carboxyl group is preferred. The chain is Proton-coupled amino acid transporter 2 from Homo sapiens (Human).